Here is a 332-residue protein sequence, read N- to C-terminus: UDP-N-acetylenolpyruvoylglucosamine reductase (332 aa).

An FAD-binding PCMH-type domain is found at 45–243 (RAGGHAAYFY…LGTRIKTQPL (199 aa)). Residue Arg-194 is part of the active site. The Proton donor role is filled by Ser-250. Residue Glu-320 is part of the active site.

It belongs to the MurB family. It depends on FAD as a cofactor.

The protein localises to the cytoplasm. The enzyme catalyses UDP-N-acetyl-alpha-D-muramate + NADP(+) = UDP-N-acetyl-3-O-(1-carboxyvinyl)-alpha-D-glucosamine + NADPH + H(+). Its pathway is cell wall biogenesis; peptidoglycan biosynthesis. Cell wall formation. This is UDP-N-acetylenolpyruvoylglucosamine reductase from Nitrosomonas eutropha (strain DSM 101675 / C91 / Nm57).